A 2339-amino-acid polypeptide reads, in one-letter code: DNA-directed RNA polymerase III subunit RPC1 (2339 aa).

The Zn(2+) site is built by Cys88, Cys91, Cys98, His101, Cys128, Cys131, and Cys175. Residues Asp611, Asp613, and Asp615 each coordinate Mg(2+). Positions 955 to 967 (PTEFFFHTMSGRE) are bridging helix. Disordered stretches follow at residues 1503 to 1557 (EKRK…NNYY) and 2038 to 2079 (LKSE…DSDR). Residues 1509 to 1520 (PKEEKENFDRNN) show a composition bias toward basic and acidic residues. Over residues 1521 to 1557 (YKMITDNNNNDNNNNNNDNNNNDNNNNNNNSNNNNYY) the composition is skewed to low complexity. Residues 2038–2047 (LKSEKKKDIN) are compositionally biased toward basic and acidic residues. The span at 2049 to 2059 (DNNNNDDNNNN) shows a compositional bias: low complexity.

This sequence belongs to the RNA polymerase beta' chain family. Component of the RNA polymerase III (Pol III) complex consisting of 17 subunits.

It is found in the nucleus. The enzyme catalyses RNA(n) + a ribonucleoside 5'-triphosphate = RNA(n+1) + diphosphate. Functionally, DNA-dependent RNA polymerase catalyzes the transcription of DNA into RNA using the four ribonucleoside triphosphates as substrates. Largest and catalytic core component of RNA polymerase III which synthesizes small RNAs, such as 5S rRNA and tRNAs. Forms the polymerase active center together with the second largest subunit. A single-stranded DNA template strand of the promoter is positioned within the central active site cleft of Pol III. A bridging helix emanates from RPC1 and crosses the cleft near the catalytic site and is thought to promote translocation of Pol III by acting as a ratchet that moves the RNA-DNA hybrid through the active site by switching from straight to bent conformations at each step of nucleotide addition. The protein is DNA-directed RNA polymerase III subunit RPC1 of Plasmodium falciparum.